Reading from the N-terminus, the 366-residue chain is Histidinol-phosphate aminotransferase 2 (366 aa).

The interval 1-21 is disordered; the sequence is MQVKDQLSLLQPYKPGKSPEQ. Position 222 is an N6-(pyridoxal phosphate)lysine (Lys222).

The protein belongs to the class-II pyridoxal-phosphate-dependent aminotransferase family. Histidinol-phosphate aminotransferase subfamily. As to quaternary structure, homodimer. It depends on pyridoxal 5'-phosphate as a cofactor.

The catalysed reaction is L-histidinol phosphate + 2-oxoglutarate = 3-(imidazol-4-yl)-2-oxopropyl phosphate + L-glutamate. The protein operates within amino-acid biosynthesis; L-histidine biosynthesis; L-histidine from 5-phospho-alpha-D-ribose 1-diphosphate: step 7/9. This is Histidinol-phosphate aminotransferase 2 from Bacillus cereus (strain ZK / E33L).